The chain runs to 158 residues: Ribosome maturation factor RimP (158 aa).

Belongs to the RimP family.

It is found in the cytoplasm. Its function is as follows. Required for maturation of 30S ribosomal subunits. In Lactobacillus acidophilus (strain ATCC 700396 / NCK56 / N2 / NCFM), this protein is Ribosome maturation factor RimP.